Consider the following 217-residue polypeptide: Ribulose-phosphate 3-epimerase (217 aa).

Residue Ser-7 coordinates substrate. A divalent metal cation-binding residues include His-32, Asp-34, and His-65. The Proton acceptor role is filled by Asp-34. Residues His-65, 141 to 144, 175 to 177, and 197 to 198 each bind substrate; these read GFGG, DGG, and GS. Asp-175 contacts a divalent metal cation. Catalysis depends on Asp-175, which acts as the Proton donor.

It belongs to the ribulose-phosphate 3-epimerase family. Requires a divalent metal cation as cofactor.

It carries out the reaction D-ribulose 5-phosphate = D-xylulose 5-phosphate. Its pathway is carbohydrate degradation. Functionally, catalyzes the reversible epimerization of D-ribulose 5-phosphate to D-xylulose 5-phosphate. The chain is Ribulose-phosphate 3-epimerase from Bacillus subtilis (strain 168).